The sequence spans 415 residues: Imidazolonepropionase (415 aa).

Fe(3+) is bound by residues His83 and His85. 2 residues coordinate Zn(2+): His83 and His85. The 4-imidazolone-5-propanoate site is built by Arg92, Tyr155, and His188. Tyr155 is a binding site for N-formimidoyl-L-glutamate. His250 is a binding site for Fe(3+). His250 is a binding site for Zn(2+). Gln253 is a 4-imidazolone-5-propanoate binding site. Asp324 provides a ligand contact to Fe(3+). Residue Asp324 coordinates Zn(2+). The N-formimidoyl-L-glutamate site is built by Asn326 and Gly328. Ser329 is a binding site for 4-imidazolone-5-propanoate.

Belongs to the metallo-dependent hydrolases superfamily. HutI family. It depends on Zn(2+) as a cofactor. Requires Fe(3+) as cofactor.

It is found in the cytoplasm. The enzyme catalyses 4-imidazolone-5-propanoate + H2O = N-formimidoyl-L-glutamate. The protein operates within amino-acid degradation; L-histidine degradation into L-glutamate; N-formimidoyl-L-glutamate from L-histidine: step 3/3. In terms of biological role, catalyzes the hydrolytic cleavage of the carbon-nitrogen bond in imidazolone-5-propanoate to yield N-formimidoyl-L-glutamate. It is the third step in the universal histidine degradation pathway. In Rubrobacter xylanophilus (strain DSM 9941 / JCM 11954 / NBRC 16129 / PRD-1), this protein is Imidazolonepropionase.